Here is a 259-residue protein sequence, read N- to C-terminus: Global transcriptional regulator CodY (259 aa).

Residues 1–155 are GAF domain; that stretch reads MDLLTRTRKI…GATVVGMEIL (155 aa). The segment at residues 203 to 222 is a DNA-binding region (H-T-H motif); it reads ASKIADRVGITRSVIVNALR. A Phosphoserine modification is found at serine 215.

Belongs to the CodY family.

The protein resides in the cytoplasm. Its function is as follows. DNA-binding global transcriptional regulator which is involved in the adaptive response to starvation and acts by directly or indirectly controlling the expression of numerous genes in response to nutrient availability. During rapid exponential growth, CodY is highly active and represses genes whose products allow adaptation to nutrient depletion. In Shouchella clausii (strain KSM-K16) (Alkalihalobacillus clausii), this protein is Global transcriptional regulator CodY.